The following is a 318-amino-acid chain: Olfactory receptor 2T34 (318 aa).

Topologically, residues 1 to 30 (MCSGNQTSQNQTASTDFTLTGLFAESKHAA) are extracellular. Asn5 and Asn10 each carry an N-linked (GlcNAc...) asparagine glycan. The helical transmembrane segment at 31–54 (LLYTVTFLLFLMALTGNALLILLI) threads the bilayer. Residues 55-62 (HSEPRLHT) lie on the Cytoplasmic side of the membrane. Residues 63-84 (PMYFFISQLALMDLMYLCVTVP) traverse the membrane as a helical segment. Residues 85 to 105 (KMLVGQVTGDDTISPSGCGIQ) are Extracellular-facing. Cys102 and Cys194 are disulfide-bonded. A helical membrane pass occupies residues 106–125 (MFFHLTLAGAEVFLLAAMAY). Topologically, residues 126-144 (DRYAAVCRPLHYPLLMNQR) are cytoplasmic. The chain crosses the membrane as a helical span at residues 145–163 (VCQLLVSACWVLGMVDGLL). Residues 164–200 (LTPITMSFPFCQSRKILSFFCETPALLKLSCSDVSLY) lie on the Extracellular side of the membrane. A helical transmembrane segment spans residues 201–224 (KMLTYLCCILMLLTPIMVISSSYT). Over 225-241 (LILHLIHRMNSAAGRRK) the chain is Cytoplasmic. Residues 242–264 (ALATCSSHMIIVLLLFGASFYTY) form a helical membrane-spanning segment. Residues 265–277 (MLRSSYHTAEQDM) lie on the Extracellular side of the membrane. The chain crosses the membrane as a helical span at residues 278 to 297 (MVSAFYTIFTPVLNPLIYSL). Over 298 to 318 (RNKDVTRALRSMMQSRMNQEK) the chain is Cytoplasmic.

This sequence belongs to the G-protein coupled receptor 1 family.

It localises to the cell membrane. Its function is as follows. Odorant receptor. This is Olfactory receptor 2T34 (OR2T34) from Homo sapiens (Human).